The chain runs to 416 residues: GTPase ERA1, chloroplastic (416 aa).

The N-terminal 53 residues, 1 to 53, are a transit peptide targeting the chloroplast; the sequence is MELGLALRLVAPPPLLPCLSRRALSLPPDFVSSRVLRGRRIHASRLKHGAGVV. An Era-type G domain is found at 117–287; it reads RSGYVAVLGK…KEWILSKLPL (171 aa). The tract at residues 125 to 132 is G1; the sequence is GKPNVGKS. 125 to 132 is a GTP binding site; sequence GKPNVGKS. The G2 stretch occupies residues 151 to 155; that stretch reads QTTRH. The G3 stretch occupies residues 172-175; sequence DTPG. Residues 172 to 176 and 237 to 240 each bind GTP; these read DTPGV and NKKD. Positions 237 to 240 are G4; that stretch reads NKKD. The interval 266 to 268 is G5; it reads ISA. The KH type-2 domain occupies 318 to 395; it reads YRQEIPYSCQ…YLEVEVKVKE (78 aa).

This sequence belongs to the TRAFAC class TrmE-Era-EngA-EngB-Septin-like GTPase superfamily. Era GTPase family.

The protein localises to the plastid. Its subcellular location is the chloroplast stroma. It localises to the chloroplast nucleoid. Functionally, nuclear genome-encoded probable GTPase involved in ribosome biogenesis in chloroplasts. Plays a role in 16S rRNA maturation in plastids and may contribute to the assembly of the small (30S) ribosomal subunit. This Zea mays (Maize) protein is GTPase ERA1, chloroplastic.